The sequence spans 378 residues: Erythronate-4-phosphate dehydrogenase (378 aa).

Positions 45 and 66 each coordinate substrate. 2 residues coordinate NAD(+): aspartate 146 and threonine 175. The active site involves arginine 208. Aspartate 232 is a binding site for NAD(+). Glutamate 237 is a catalytic residue. Residue histidine 254 is the Proton donor of the active site. Glycine 257 serves as a coordination point for NAD(+). Tyrosine 258 provides a ligand contact to substrate.

This sequence belongs to the D-isomer specific 2-hydroxyacid dehydrogenase family. PdxB subfamily. In terms of assembly, homodimer.

It is found in the cytoplasm. The catalysed reaction is 4-phospho-D-erythronate + NAD(+) = (R)-3-hydroxy-2-oxo-4-phosphooxybutanoate + NADH + H(+). The protein operates within cofactor biosynthesis; pyridoxine 5'-phosphate biosynthesis; pyridoxine 5'-phosphate from D-erythrose 4-phosphate: step 2/5. In terms of biological role, catalyzes the oxidation of erythronate-4-phosphate to 3-hydroxy-2-oxo-4-phosphonooxybutanoate. This chain is Erythronate-4-phosphate dehydrogenase, found in Salmonella agona (strain SL483).